The chain runs to 426 residues: Histidine--tRNA ligase (426 aa).

This sequence belongs to the class-II aminoacyl-tRNA synthetase family. Homodimer.

It localises to the cytoplasm. The enzyme catalyses tRNA(His) + L-histidine + ATP = L-histidyl-tRNA(His) + AMP + diphosphate + H(+). The sequence is that of Histidine--tRNA ligase from Streptococcus thermophilus (strain ATCC BAA-491 / LMD-9).